The chain runs to 152 residues: 2-C-methyl-D-erythritol 2,4-cyclodiphosphate synthase (152 aa).

The a divalent metal cation site is built by aspartate 8 and histidine 10. 4-CDP-2-C-methyl-D-erythritol 2-phosphate is bound by residues 8-10 (DSH) and 34-35 (HS). Residue histidine 42 coordinates a divalent metal cation. Residues 56-58 (DIG), 61-65 (FPDTD), 100-106 (LDRPKLG), and 131-135 (FKTSE) contribute to the 4-CDP-2-C-methyl-D-erythritol 2-phosphate site.

This sequence belongs to the IspF family. In terms of assembly, homotrimer. A divalent metal cation serves as cofactor.

The catalysed reaction is 4-CDP-2-C-methyl-D-erythritol 2-phosphate = 2-C-methyl-D-erythritol 2,4-cyclic diphosphate + CMP. It participates in isoprenoid biosynthesis; isopentenyl diphosphate biosynthesis via DXP pathway; isopentenyl diphosphate from 1-deoxy-D-xylulose 5-phosphate: step 4/6. Its function is as follows. Involved in the biosynthesis of isopentenyl diphosphate (IPP) and dimethylallyl diphosphate (DMAPP), two major building blocks of isoprenoid compounds. Catalyzes the conversion of 4-diphosphocytidyl-2-C-methyl-D-erythritol 2-phosphate (CDP-ME2P) to 2-C-methyl-D-erythritol 2,4-cyclodiphosphate (ME-CPP) with a corresponding release of cytidine 5-monophosphate (CMP). The sequence is that of 2-C-methyl-D-erythritol 2,4-cyclodiphosphate synthase from Thermus thermophilus (strain ATCC 27634 / DSM 579 / HB8).